The primary structure comprises 593 residues: Pyruvate kinase isozyme A, chloroplastic (593 aa).

The interval 57-94 (DEPQSSPVLVSENGSGGVLSSATQEYGRNAAPGTDSSS) is disordered. R144 is a substrate binding site. N146, D178, and T179 together coordinate K(+). Position 146 to 149 (146 to 149 (NMCH)) interacts with ATP. E343 is a Mg(2+) binding site. 3 residues coordinate substrate: G366, D367, and S399. Position 367 (D367) interacts with Mg(2+).

This sequence belongs to the pyruvate kinase family. The cofactor is Mg(2+). It depends on K(+) as a cofactor. In terms of tissue distribution, highest levels in roots. Also found in stems, leaves and flowers.

It localises to the plastid. It is found in the chloroplast. The catalysed reaction is pyruvate + ATP = phosphoenolpyruvate + ADP + H(+). The protein operates within carbohydrate degradation; glycolysis; pyruvate from D-glyceraldehyde 3-phosphate: step 5/5. This is Pyruvate kinase isozyme A, chloroplastic from Nicotiana tabacum (Common tobacco).